A 59-amino-acid polypeptide reads, in one-letter code: Protein translocase subunit SecE (59 aa).

A helical transmembrane segment spans residues 30-50; the sequence is ITVISTVIFFVIFFALLDTGI.

Belongs to the SecE/SEC61-gamma family. As to quaternary structure, component of the Sec protein translocase complex. Heterotrimer consisting of SecY, SecE and SecG subunits. The heterotrimers can form oligomers, although 1 heterotrimer is thought to be able to translocate proteins. Interacts with the ribosome. Interacts with SecDF, and other proteins may be involved. Interacts with SecA.

The protein resides in the cell membrane. Essential subunit of the Sec protein translocation channel SecYEG. Clamps together the 2 halves of SecY. May contact the channel plug during translocation. This Bacillus subtilis (strain 168) protein is Protein translocase subunit SecE.